Reading from the N-terminus, the 280-residue chain is Thymidylate synthase (280 aa).

Position 21 (Arg21) interacts with dUMP. His51 serves as a coordination point for (6R)-5,10-methylene-5,6,7,8-tetrahydrofolate. A dUMP-binding site is contributed by 142-143 (RR). Cys162 serves as the catalytic Nucleophile. Residues 182-185 (RSAD), Asn193, and 223-225 (HLY) contribute to the dUMP site. Asp185 provides a ligand contact to (6R)-5,10-methylene-5,6,7,8-tetrahydrofolate. Ala279 lines the (6R)-5,10-methylene-5,6,7,8-tetrahydrofolate pocket.

It belongs to the thymidylate synthase family. Bacterial-type ThyA subfamily. Homodimer.

It localises to the cytoplasm. It carries out the reaction dUMP + (6R)-5,10-methylene-5,6,7,8-tetrahydrofolate = 7,8-dihydrofolate + dTMP. The protein operates within pyrimidine metabolism; dTTP biosynthesis. Functionally, catalyzes the reductive methylation of 2'-deoxyuridine-5'-monophosphate (dUMP) to 2'-deoxythymidine-5'-monophosphate (dTMP) while utilizing 5,10-methylenetetrahydrofolate (mTHF) as the methyl donor and reductant in the reaction, yielding dihydrofolate (DHF) as a by-product. This enzymatic reaction provides an intracellular de novo source of dTMP, an essential precursor for DNA biosynthesis. In Acinetobacter baumannii (strain AB307-0294), this protein is Thymidylate synthase.